A 251-amino-acid chain; its full sequence is Derlin-1 (251 aa).

The residue at position 2 (Ser-2) is an N-acetylserine. Residues 2–15 lie on the Cytoplasmic side of the membrane; that stretch reads SDIGDWFRSIPTIT. A helical membrane pass occupies residues 16–31; it reads RYWFAATVAVPLVGKL. The Lumenal segment spans residues 32 to 69; it reads GLISPAYFFLWPEAFLYRFQIWRPITATFYFPVGPGTG. A helical membrane pass occupies residues 70 to 89; sequence FLYLVNLYFLYQYSTRLETG. Topologically, residues 90 to 94 are cytoplasmic; sequence AFDGR. A helical transmembrane segment spans residues 95–115; sequence PADYLFMLLFNWICIVITGLA. Residues 116–122 lie on the Lumenal side of the membrane; that stretch reads MDMQLLM. Residues 123–137 traverse the membrane as a helical segment; the sequence is IPLIMSVLYVWAQLN. Residues 138 to 154 lie on the Cytoplasmic side of the membrane; the sequence is RDMIVSFWFGTRFKACY. A helical transmembrane segment spans residues 155-166; that stretch reads LPWVILGFNYII. Topologically, residues 167–170 are lumenal; that stretch reads GGSV. A helical transmembrane segment spans residues 171–189; sequence INELIGNLVGHLYFFLMFR. The Cytoplasmic segment spans residues 190-251; sequence YPMDLGGRNF…WGQGFRLGDQ (62 aa). Ser-201 carries the phosphoserine modification. Thr-202 is subject to Phosphothreonine. Position 226 is a phosphoserine (Ser-226). Residues 229-251 are disordered; it reads RAADQNGGGGRHNWGQGFRLGDQ. Residues 241 to 248 carry the SHP-box motif; the sequence is NWGQGFRL.

This sequence belongs to the derlin family. As to quaternary structure, homotetramer. The four subunits of the tetramer are arranged in a twofold symmetry. Forms homo- and heterooligomers with DERL2 and DERL3; binding to DERL3 is poorer than that between DERL2 and DERL3. Interacts (via SHP-box motif) with VCP. Interacts with AMFR, SELENOS, SEL1L, SELENOK and SYVN1, as well as with SEL1L-SYVN1 and VCP-SELENOS protein complexes; this interaction is weaker than that observed between DERL2 and these complexes. Interacts with NGLY1 and YOD1. Does not bind to EDEM1. Interacts with DNAJB9. Interacts with RNF103. Interacts with HM13. Interacts with XBP1 isoform 1 (via luminal/ectodomain domain); the interaction obviates the need for ectodomain shedding prior HM13/SPP-mediated XBP1 isoform 1 cleavage. Interacts with the signal recognition particle/SRP and the SRP receptor; in the process of endoplasmic reticulum stress-induced pre-emptive quality control. May interact with UBXN6. Interacts with ZFAND2B; probably through VCP. Interacts with CCDC47. Interacts with C18orf32. May interact with TRAM1. Forms a complex with SVIP and VCP/p97.

Its subcellular location is the endoplasmic reticulum membrane. Functionally, functional component of endoplasmic reticulum-associated degradation (ERAD) for misfolded lumenal proteins. Forms homotetramers which encircle a large channel traversing the endoplasmic reticulum (ER) membrane. This allows the retrotranslocation of misfolded proteins from the ER into the cytosol where they are ubiquitinated and degraded by the proteasome. The channel has a lateral gate within the membrane which provides direct access to membrane proteins with no need to reenter the ER lumen first. May mediate the interaction between VCP and the misfolded protein. Also involved in endoplasmic reticulum stress-induced pre-emptive quality control, a mechanism that selectively attenuates the translocation of newly synthesized proteins into the endoplasmic reticulum and reroutes them to the cytosol for proteasomal degradation. By controlling the steady-state expression of the IGF1R receptor, indirectly regulates the insulin-like growth factor receptor signaling pathway. This Bos taurus (Bovine) protein is Derlin-1.